Reading from the N-terminus, the 260-residue chain is Ribosomal RNA small subunit methyltransferase A (260 aa).

S-adenosyl-L-methionine is bound by residues L23, G48, E69, D94, and N110.

The protein belongs to the class I-like SAM-binding methyltransferase superfamily. rRNA adenine N(6)-methyltransferase family. RsmA subfamily.

The protein localises to the cytoplasm. It catalyses the reaction adenosine(1518)/adenosine(1519) in 16S rRNA + 4 S-adenosyl-L-methionine = N(6)-dimethyladenosine(1518)/N(6)-dimethyladenosine(1519) in 16S rRNA + 4 S-adenosyl-L-homocysteine + 4 H(+). Specifically dimethylates two adjacent adenosines (A1518 and A1519) in the loop of a conserved hairpin near the 3'-end of 16S rRNA in the 30S particle. May play a critical role in biogenesis of 30S subunits. This is Ribosomal RNA small subunit methyltransferase A from Thermotoga petrophila (strain ATCC BAA-488 / DSM 13995 / JCM 10881 / RKU-1).